The chain runs to 412 residues: UPF0754 membrane protein syc0451_d (412 aa).

Helical transmembrane passes span 8 to 28 (LWLL…DLAI) and 390 to 410 (IGGV…VWSL).

This sequence belongs to the UPF0754 family.

The protein localises to the cell inner membrane. The polypeptide is UPF0754 membrane protein syc0451_d (Synechococcus sp. (strain ATCC 27144 / PCC 6301 / SAUG 1402/1) (Anacystis nidulans)).